Reading from the N-terminus, the 68-residue chain is Lantibiotic mersacidin (68 aa).

The tract at residues Met1–Phe28 is disordered. Residues Met1–Ala48 constitute a propeptide that is removed on maturation. The segment at residues Cys49 to Thr50 is a cross-link (beta-methyllanthionine (Cys-Thr)). 2 cross-links (beta-methyllanthionine (Thr-Cys)) span residues Thr52–Cys60 and Thr61–Cys66. A cross-link (S-(2-aminovinyl)-3-methyl-D-cysteine (Thr-Cys)) is located at residues Thr63 to Cys68. Ser64 is modified (2,3-didehydroalanine (Ser)).

The protein belongs to the type B lantibiotic family. In terms of processing, maturation of lantibiotics involves the enzymatic conversion of Thr, and Ser into dehydrated AA and the formation of thioether bonds with cysteine. The carboxy-terminal beta-methyllanthionine undergoes decarboxylation. This is followed by membrane translocation and cleavage of the modified precursor.

Functionally, kills a number of Gram-positive bacteria. Acts at the level of cell wall biosynthesis by interfering with bacterial peptidoglycan biosynthesis. Specifically inhibits the conversion of the lipid II intermediate into polymeric nascent glycan strands by transglycosylation. May interact with the peptidoglycan precursor rather than with the enzyme. This chain is Lantibiotic mersacidin (mrsA), found in Bacillus sp. (strain HIL-Y85/54728).